A 123-amino-acid polypeptide reads, in one-letter code: Histone H2B 2 (123 aa).

The tract at residues 1 to 32 is disordered; that stretch reads MAPPKPSAKGAKKAAKTVTKPKDGKKRRHARK. Residue Ser-110 is glycosylated (O-linked (GlcNAc) serine). Residue Lys-118 forms a Glycyl lysine isopeptide (Lys-Gly) (interchain with G-Cter in ubiquitin) linkage.

It belongs to the histone H2B family. As to quaternary structure, the nucleosome is a histone octamer containing two molecules each of H2A, H2B, H3 and H4 assembled in one H3-H4 heterotetramer and two H2A-H2B heterodimers. The octamer wraps approximately 147 bp of DNA. In terms of processing, monoubiquitination of Lys-118 gives a specific tag for epigenetic transcriptional activation and is also prerequisite for histone H3 'Lys-4' and 'Lys-79' methylation. Post-translationally, glcNAcylation at Ser-110 promotes monoubiquitination of Lys-118. It fluctuates in response to extracellular glucose, and associates with transcribed genes.

It localises to the nucleus. It is found in the chromosome. Functionally, core component of nucleosome. Nucleosomes wrap and compact DNA into chromatin, limiting DNA accessibility to the cellular machineries which require DNA as a template. Histones thereby play a central role in transcription regulation, DNA repair, DNA replication and chromosomal stability. DNA accessibility is regulated via a complex set of post-translational modifications of histones, also called histone code, and nucleosome remodeling. The chain is Histone H2B 2 (his-4) from Caenorhabditis elegans.